Consider the following 101-residue polypeptide: uncharacterized protein (101 aa).

This is an uncharacterized protein from Mycobacterium bovis (strain ATCC BAA-935 / AF2122/97).